The following is a 251-amino-acid chain: Adenylate kinase (251 aa).

Residue 46–51 (GAGKGT) coordinates ATP. Positions 66–95 (ATGDMLRSQVQQQTPLGVEAKKIMDAGGLV) are NMP. AMP is bound by residues threonine 67, arginine 72, 93 to 95 (GLV), 122 to 125 (GFPR), and glutamine 129. Residues 163 to 200 (GRLVHPASGRSYHKVFNPPKKEMIDDITGEALVQRSDD) form an LID region. Residues arginine 164 and 173–174 (SY) each bind ATP. AMP-binding residues include arginine 197 and arginine 208. Glutamine 236 lines the ATP pocket.

Belongs to the adenylate kinase family. AK2 subfamily. In terms of assembly, monomer.

The protein localises to the cytoplasm. It is found in the cytosol. Its subcellular location is the mitochondrion intermembrane space. The catalysed reaction is AMP + ATP = 2 ADP. In terms of biological role, catalyzes the reversible transfer of the terminal phosphate group between ATP and AMP. Plays an important role in cellular energy homeostasis and in adenine nucleotide metabolism. Adenylate kinase activity is critical for regulation of the phosphate utilization and the AMP de novo biosynthesis pathways. In Yarrowia lipolytica (strain CLIB 122 / E 150) (Yeast), this protein is Adenylate kinase.